Consider the following 478-residue polypeptide: Subtilisin-like protease 3 (478 aa).

The first 17 residues, 1–17 (MKFSTILPILWANCCLC), serve as a signal peptide directing secretion. Residues 70–167 (RYVIVFNEDI…FVEQETTVKI (98 aa)) form the Inhibitor I9 domain. Residues 177–478 (PWGLHRVSHR…GGGKKLDGFW (302 aa)) enclose the Peptidase S8 domain. Residues D213, H245, and S407 each act as charge relay system in the active site.

This sequence belongs to the peptidase S8 family.

Serine protease with unknown substrate. The chain is Subtilisin-like protease 3 (YSP3) from Saccharomyces cerevisiae (strain ATCC 204508 / S288c) (Baker's yeast).